The following is a 544-amino-acid chain: Chaperonin GroEL 1 (544 aa).

Residues 29-32 (TLGP), 86-90 (DGTTT), Gly-413, and Asp-495 contribute to the ATP site. Positions 525-544 (PEPKTNTPASSGSGMSDYDY) are disordered. Polar residues predominate over residues 528–538 (KTNTPASSGSG).

This sequence belongs to the chaperonin (HSP60) family. Forms a cylinder of 14 subunits composed of two heptameric rings stacked back-to-back. Interacts with the co-chaperonin GroES.

Its subcellular location is the cytoplasm. It carries out the reaction ATP + H2O + a folded polypeptide = ADP + phosphate + an unfolded polypeptide.. Its function is as follows. Together with its co-chaperonin GroES, plays an essential role in assisting protein folding. The GroEL-GroES system forms a nano-cage that allows encapsulation of the non-native substrate proteins and provides a physical environment optimized to promote and accelerate protein folding. The polypeptide is Chaperonin GroEL 1 (Synechococcus sp. (strain JA-2-3B'a(2-13)) (Cyanobacteria bacterium Yellowstone B-Prime)).